The primary structure comprises 89 residues: uncharacterized protein (89 aa).

A helical transmembrane segment spans residues 20-39 (SFAMTTYLNLFVKLLIFLYI).

It is found in the membrane. This is an uncharacterized protein from Escherichia coli (strain K12).